The chain runs to 231 residues: Large ribosomal subunit protein uL1 (231 aa).

This sequence belongs to the universal ribosomal protein uL1 family. In terms of assembly, part of the 50S ribosomal subunit.

Its function is as follows. Binds directly to 23S rRNA. The L1 stalk is quite mobile in the ribosome, and is involved in E site tRNA release. Functionally, protein L1 is also a translational repressor protein, it controls the translation of the L11 operon by binding to its mRNA. In Pseudomonas fluorescens (strain Pf0-1), this protein is Large ribosomal subunit protein uL1.